The sequence spans 786 residues: Endonuclease MutS2 (786 aa).

Position 332–339 (332–339 (GPNTGGKT)) interacts with ATP. The 76-residue stretch at 711-786 (IDLRGMDSME…GTGVTVVELK (76 aa)) folds into the Smr domain.

The protein belongs to the DNA mismatch repair MutS family. MutS2 subfamily. In terms of assembly, homodimer. Binds to stalled ribosomes, contacting rRNA.

Its function is as follows. Endonuclease that is involved in the suppression of homologous recombination and thus may have a key role in the control of bacterial genetic diversity. In terms of biological role, acts as a ribosome collision sensor, splitting the ribosome into its 2 subunits. Detects stalled/collided 70S ribosomes which it binds and splits by an ATP-hydrolysis driven conformational change. Acts upstream of the ribosome quality control system (RQC), a ribosome-associated complex that mediates the extraction of incompletely synthesized nascent chains from stalled ribosomes and their subsequent degradation. Probably generates substrates for RQC. The polypeptide is Endonuclease MutS2 (Clostridium tetani (strain Massachusetts / E88)).